Reading from the N-terminus, the 343-residue chain is ATPase GET3 (343 aa).

32-39 is a binding site for ATP; it reads KGGVGKTT. Asp61 is a catalytic residue. ATP-binding residues include Glu245 and Asn272. Zn(2+)-binding residues include Cys283 and Cys286.

Belongs to the arsA ATPase family. In terms of assembly, homodimer.

Its subcellular location is the cytoplasm. The protein resides in the endoplasmic reticulum. In terms of biological role, ATPase required for the post-translational delivery of tail-anchored (TA) proteins to the endoplasmic reticulum. Recognizes and selectively binds the transmembrane domain of TA proteins in the cytosol. This complex then targets to the endoplasmic reticulum by membrane-bound receptors, where the tail-anchored protein is released for insertion. This process is regulated by ATP binding and hydrolysis. ATP binding drives the homodimer towards the closed dimer state, facilitating recognition of newly synthesized TA membrane proteins. ATP hydrolysis is required for insertion. Subsequently, the homodimer reverts towards the open dimer state, lowering its affinity for the membrane-bound receptor, and returning it to the cytosol to initiate a new round of targeting. The protein is ATPase GET3 of Pyricularia oryzae (strain 70-15 / ATCC MYA-4617 / FGSC 8958) (Rice blast fungus).